Reading from the N-terminus, the 143-residue chain is Large ribosomal subunit protein uL11 (143 aa).

This sequence belongs to the universal ribosomal protein uL11 family. Part of the ribosomal stalk of the 50S ribosomal subunit. Interacts with L10 and the large rRNA to form the base of the stalk. L10 forms an elongated spine to which L12 dimers bind in a sequential fashion forming a multimeric L10(L12)X complex. In terms of processing, one or more lysine residues are methylated.

Functionally, forms part of the ribosomal stalk which helps the ribosome interact with GTP-bound translation factors. The protein is Large ribosomal subunit protein uL11 of Rhizobium etli (strain ATCC 51251 / DSM 11541 / JCM 21823 / NBRC 15573 / CFN 42).